Here is a 496-residue protein sequence, read N- to C-terminus: Aspartyl/glutamyl-tRNA(Asn/Gln) amidotransferase subunit B (496 aa).

This sequence belongs to the GatB/GatE family. GatB subfamily. Heterotrimer of A, B and C subunits.

It catalyses the reaction L-glutamyl-tRNA(Gln) + L-glutamine + ATP + H2O = L-glutaminyl-tRNA(Gln) + L-glutamate + ADP + phosphate + H(+). It carries out the reaction L-aspartyl-tRNA(Asn) + L-glutamine + ATP + H2O = L-asparaginyl-tRNA(Asn) + L-glutamate + ADP + phosphate + 2 H(+). Its function is as follows. Allows the formation of correctly charged Asn-tRNA(Asn) or Gln-tRNA(Gln) through the transamidation of misacylated Asp-tRNA(Asn) or Glu-tRNA(Gln) in organisms which lack either or both of asparaginyl-tRNA or glutaminyl-tRNA synthetases. The reaction takes place in the presence of glutamine and ATP through an activated phospho-Asp-tRNA(Asn) or phospho-Glu-tRNA(Gln). This is Aspartyl/glutamyl-tRNA(Asn/Gln) amidotransferase subunit B from Picosynechococcus sp. (strain ATCC 27264 / PCC 7002 / PR-6) (Agmenellum quadruplicatum).